A 507-amino-acid polypeptide reads, in one-letter code: Protein DETOXIFICATION 41 (507 aa).

Residues 1–62 (MSSTETYEPL…KLLWTLSGAS (62 aa)) are Cytoplasmic-facing. A helical transmembrane segment spans residues 63-83 (IVVSVLNYMLSFVTVMFTGHL). The Vacuolar portion of the chain corresponds to 84–92 (GSLQLAGAS). A helical membrane pass occupies residues 93–113 (IATVGIQGLAYGIMLGMASAV). At 114-137 (QTVCGQAYGARQYSSMGIICQRAM) the chain is on the cytoplasmic side. A helical transmembrane segment spans residues 138–158 (VLHLAAAVFLTFLYWYSGPIL). Over 159-170 (KTMGQSVAIAHE) the chain is Vacuolar. The chain crosses the membrane as a helical span at residues 171-191 (GQIFARGMIPQIYAFALACPM). The Cytoplasmic segment spans residues 192–202 (QRFLQAQNIVN). Residues 203–223 (PLAYMSLGVFLLHTLLTWLVT) traverse the membrane as a helical segment. Residue Asn224 is a topological domain, vacuolar. The chain crosses the membrane as a helical span at residues 225–245 (VLDFGLLGAALILSFSWWLLV). The Cytoplasmic portion of the chain corresponds to 246 to 283 (AVNGMYILMSPNCKETWTGFSTRAFRGIWPYFKLTVAS). Residues 284–304 (AVMLCLEIWYNQGLVIISGLL) traverse the membrane as a helical segment. Topologically, residues 305–312 (SNPTISLD) are vacuolar. Residues 313 to 333 (AISICMYYLNWDMQFMLGLSA) form a helical membrane-spanning segment. The Cytoplasmic portion of the chain corresponds to 334 to 355 (AISVRVSNELGAGNPRVAMLSV). A helical transmembrane segment spans residues 356 to 376 (VVVNITTVLISSVLCVIVLVF). At 377–389 (RVGLSKAFTSDAE) the chain is on the vacuolar side. The chain crosses the membrane as a helical span at residues 390–410 (VIAAVSDLFPLLAVSIFLNGI). The Cytoplasmic portion of the chain corresponds to 411-425 (QPILSGVAIGSGWQA). A helical membrane pass occupies residues 426–446 (VVAYVNLVTYYVIGLPIGCVL). Residues 447–453 (GFKTSLG) lie on the Vacuolar side of the membrane. The helical transmembrane segment at 454-474 (VAGIWWGMIAGVILQTLTLIV) threads the bilayer. At 475–507 (LTLKTNWTSEVENAAQRVKTSATENQEMANAGV) the chain is on the cytoplasmic side.

Belongs to the multi antimicrobial extrusion (MATE) (TC 2.A.66.1) family. As to expression, expressed in reproductive tissues, from buds to siliques. Restricted to the endothelium layer of the ovule and the seed coat.

It localises to the vacuole membrane. It functions in the pathway secondary metabolite biosynthesis; flavonoid biosynthesis. Its function is as follows. Acts as a flavonoid/H(+)-antiporter that control the vacuolar sequestration of flavonoids in the seed coat endothelium. Could transport the anthocyanin cyanidin-3-O-glucoside and epicatechin 3'-O-glucoside in vitro. This Arabidopsis thaliana (Mouse-ear cress) protein is Protein DETOXIFICATION 41.